The sequence spans 375 residues: Nicotinate-nucleotide--dimethylbenzimidazole phosphoribosyltransferase (375 aa).

Glu-323 serves as the catalytic Proton acceptor. The interval 344-375 (LPEKPEELEAGEGPEAAEESSPEPENPEALAE) is disordered. A compositionally biased stretch (acidic residues) spans 351–375 (LEAGEGPEAAEESSPEPENPEALAE).

It belongs to the CobT family.

The enzyme catalyses 5,6-dimethylbenzimidazole + nicotinate beta-D-ribonucleotide = alpha-ribazole 5'-phosphate + nicotinate + H(+). It participates in nucleoside biosynthesis; alpha-ribazole biosynthesis; alpha-ribazole from 5,6-dimethylbenzimidazole: step 1/2. Catalyzes the synthesis of alpha-ribazole-5'-phosphate from nicotinate mononucleotide (NAMN) and 5,6-dimethylbenzimidazole (DMB). This is Nicotinate-nucleotide--dimethylbenzimidazole phosphoribosyltransferase from Streptomyces avermitilis (strain ATCC 31267 / DSM 46492 / JCM 5070 / NBRC 14893 / NCIMB 12804 / NRRL 8165 / MA-4680).